The following is a 938-amino-acid chain: Isoleucine--tRNA ligase (938 aa).

The 'HIGH' region motif lies at 58–68; it reads PYANGNIHIGH. Residue glutamate 561 coordinates L-isoleucyl-5'-AMP. Positions 602 to 606 match the 'KMSKS' region motif; sequence KMSKS. An ATP-binding site is contributed by lysine 605. Residues cysteine 901, cysteine 904, cysteine 921, and cysteine 924 each contribute to the Zn(2+) site.

Belongs to the class-I aminoacyl-tRNA synthetase family. IleS type 1 subfamily. Monomer. Zn(2+) serves as cofactor.

The protein resides in the cytoplasm. The enzyme catalyses tRNA(Ile) + L-isoleucine + ATP = L-isoleucyl-tRNA(Ile) + AMP + diphosphate. In terms of biological role, catalyzes the attachment of isoleucine to tRNA(Ile). As IleRS can inadvertently accommodate and process structurally similar amino acids such as valine, to avoid such errors it has two additional distinct tRNA(Ile)-dependent editing activities. One activity is designated as 'pretransfer' editing and involves the hydrolysis of activated Val-AMP. The other activity is designated 'posttransfer' editing and involves deacylation of mischarged Val-tRNA(Ile). This is Isoleucine--tRNA ligase from Yersinia pestis bv. Antiqua (strain Angola).